A 293-amino-acid polypeptide reads, in one-letter code: Ribosomal protein L11 methyltransferase (293 aa).

Positions 145, 166, 188, and 230 each coordinate S-adenosyl-L-methionine.

This sequence belongs to the methyltransferase superfamily. PrmA family.

The protein localises to the cytoplasm. The catalysed reaction is L-lysyl-[protein] + 3 S-adenosyl-L-methionine = N(6),N(6),N(6)-trimethyl-L-lysyl-[protein] + 3 S-adenosyl-L-homocysteine + 3 H(+). In terms of biological role, methylates ribosomal protein L11. The chain is Ribosomal protein L11 methyltransferase from Mannheimia succiniciproducens (strain KCTC 0769BP / MBEL55E).